A 331-amino-acid chain; its full sequence is GTP 3',8-cyclase (331 aa).

The Radical SAM core domain maps to 1–231; that stretch reads MNAVDYLRIS…DGQVQGNGPA (231 aa). Residue Arg-8 participates in GTP binding. Residues Cys-15 and Cys-19 each coordinate [4Fe-4S] cluster. Tyr-21 is a binding site for S-adenosyl-L-methionine. Cys-22 contributes to the [4Fe-4S] cluster binding site. Residue Arg-60 coordinates GTP. Gly-64 contributes to the S-adenosyl-L-methionine binding site. Thr-91 provides a ligand contact to GTP. Position 115 (Ser-115) interacts with S-adenosyl-L-methionine. Residue Lys-157 participates in GTP binding. Residue Met-191 participates in S-adenosyl-L-methionine binding. Residues Cys-254 and Cys-257 each coordinate [4Fe-4S] cluster. 259–261 is a GTP binding site; it reads RMR. [4Fe-4S] cluster is bound at residue Cys-271.

This sequence belongs to the radical SAM superfamily. MoaA family. In terms of assembly, monomer and homodimer. It depends on [4Fe-4S] cluster as a cofactor.

It carries out the reaction GTP + AH2 + S-adenosyl-L-methionine = (8S)-3',8-cyclo-7,8-dihydroguanosine 5'-triphosphate + 5'-deoxyadenosine + L-methionine + A + H(+). The protein operates within cofactor biosynthesis; molybdopterin biosynthesis. In terms of biological role, catalyzes the cyclization of GTP to (8S)-3',8-cyclo-7,8-dihydroguanosine 5'-triphosphate. This Acaryochloris marina (strain MBIC 11017) protein is GTP 3',8-cyclase.